The following is a 148-amino-acid chain: UPF0756 membrane protein YeaL (148 aa).

Transmembrane regions (helical) follow at residues 14 to 34 (ALGFISHNTTVAVSILVLIIV), 51 to 71 (LSIGIIILTIGVMAPIASGTL), 86 to 106 (LVAIAVGVIVSWLGGRGVTLM), and 121 to 141 (VLGVALFRGVPVGPLIAAGLV).

This sequence belongs to the UPF0756 family.

The protein localises to the cell membrane. This is UPF0756 membrane protein YeaL from Shigella flexneri.